A 69-amino-acid polypeptide reads, in one-letter code: Metallothionein-like protein 3 (69 aa).

This sequence belongs to the metallothionein superfamily. Type 15 family. In terms of tissue distribution, expressed in leaf mesophyll cells, root tips, and at low levels in anthers.

Its function is as follows. Metallothioneins have a high content of cysteine residues that bind various heavy metals. Functions as a metal chelator of copper (Cu) and zinc (Zn). Plays a role in Cu homeostasis, specifically in the remobilization of Cu from senescing leaves. The mobilization of Cu from internal sources is important for seed development. This chain is Metallothionein-like protein 3, found in Arabidopsis thaliana (Mouse-ear cress).